The sequence spans 272 residues: Putative imidazole glycerol phosphate synthase subunit hisF2 (272 aa).

Residue Asp-133 is part of the active site.

The protein belongs to the HisA/HisF family. As to quaternary structure, heterodimer of HisH and HisF.

Its subcellular location is the cytoplasm. It catalyses the reaction 5-[(5-phospho-1-deoxy-D-ribulos-1-ylimino)methylamino]-1-(5-phospho-beta-D-ribosyl)imidazole-4-carboxamide + L-glutamine = D-erythro-1-(imidazol-4-yl)glycerol 3-phosphate + 5-amino-1-(5-phospho-beta-D-ribosyl)imidazole-4-carboxamide + L-glutamate + H(+). It functions in the pathway amino-acid biosynthesis; L-histidine biosynthesis; L-histidine from 5-phospho-alpha-D-ribose 1-diphosphate: step 5/9. Functionally, IGPS catalyzes the conversion of PRFAR and glutamine to IGP, AICAR and glutamate. The HisF subunit catalyzes the cyclization activity that produces IGP and AICAR from PRFAR using the ammonia provided by the HisH subunit. This Vibrio vulnificus (strain YJ016) protein is Putative imidazole glycerol phosphate synthase subunit hisF2 (hisF2).